The following is a 107-amino-acid chain: Large ribosomal subunit protein uL24 (107 aa).

This sequence belongs to the universal ribosomal protein uL24 family. As to quaternary structure, part of the 50S ribosomal subunit.

Its function is as follows. One of two assembly initiator proteins, it binds directly to the 5'-end of the 23S rRNA, where it nucleates assembly of the 50S subunit. Functionally, one of the proteins that surrounds the polypeptide exit tunnel on the outside of the subunit. The polypeptide is Large ribosomal subunit protein uL24 (Neisseria gonorrhoeae (strain ATCC 700825 / FA 1090)).